We begin with the raw amino-acid sequence, 431 residues long: Adenylosuccinate synthetase (431 aa).

GTP contacts are provided by residues 13-19 (GDEGKGK) and 41-43 (GHT). Aspartate 14 functions as the Proton acceptor in the catalytic mechanism. Residues aspartate 14 and glycine 41 each contribute to the Mg(2+) site. Residues 14–17 (DEGK), 39–42 (NAGH), threonine 130, arginine 144, glutamine 225, threonine 240, and arginine 304 contribute to the IMP site. Catalysis depends on histidine 42, which acts as the Proton donor. Position 300-306 (300-306 (ATTGRKR)) interacts with substrate. GTP contacts are provided by residues arginine 306, 332-334 (KLD), and 415-417 (STG).

Belongs to the adenylosuccinate synthetase family. As to quaternary structure, homodimer. The cofactor is Mg(2+).

The protein resides in the cytoplasm. It catalyses the reaction IMP + L-aspartate + GTP = N(6)-(1,2-dicarboxyethyl)-AMP + GDP + phosphate + 2 H(+). It functions in the pathway purine metabolism; AMP biosynthesis via de novo pathway; AMP from IMP: step 1/2. Its function is as follows. Plays an important role in the de novo pathway of purine nucleotide biosynthesis. Catalyzes the first committed step in the biosynthesis of AMP from IMP. The protein is Adenylosuccinate synthetase of Shewanella denitrificans (strain OS217 / ATCC BAA-1090 / DSM 15013).